A 670-amino-acid chain; its full sequence is G-protein coupled receptor moody (670 aa).

Topologically, residues 1 to 40 are extracellular; it reads MSDETTISLEDGYPPLEALTTMVPPADATGFSQSLLTFAA. A helical transmembrane segment spans residues 41–61; sequence VMTFLIMIVGICGNLLTVVAL. Residues 62–69 lie on the Cytoplasmic side of the membrane; that stretch reads LKCPKVRN. A helical transmembrane segment spans residues 70–90; the sequence is VAAAFIISLCIADLLFCALVL. The Extracellular segment spans residues 91–111; it reads PFQGLRFVQGTWRHGQVLCRL. Cysteines 109 and 188 form a disulfide. Residues 112–132 form a helical membrane-spanning segment; it reads IPFIQYGNIGVSLLCIAMITI. Residues 133-152 are Cytoplasmic-facing; sequence NRYVMITHHGLYARIYKRHW. The chain crosses the membrane as a helical span at residues 153–173; that stretch reads IAVMIAACWLFSYGMQLPTLL. The Extracellular segment spans residues 174–202; the sequence is GEWGRFGYDSRLQTCSIMTDDHGHSSKTT. The helical transmembrane segment at 203-223 threads the bilayer; the sequence is LFITAFVIPCLVIIACYAKIF. The Cytoplasmic portion of the chain corresponds to 224–313; that stretch reads WVVHKSEQRL…AKRNEWRITK (90 aa). The interval 258 to 302 is disordered; it reads LPSGAECQPSNRVSSDSSSSFSIDVPETAPSGKQQPTRVKDQREV. The segment covering 267–279 has biased composition (low complexity); sequence SNRVSSDSSSSFS. The helical transmembrane segment at 314 to 334 threads the bilayer; that stretch reads MVLAIFLSFVVCYLPITIVKV. Over 335 to 345 the chain is Extracellular; the sequence is ADKNVEHPSLH. A helical transmembrane segment spans residues 346–366; the sequence is ICSYILLYLSACINPIIYVIM. At 367 to 670 the chain is on the cytoplasmic side; sequence NKQYRKAYKT…LTAKMKFPKD (304 aa). Disordered regions lie at residues 461–490, 562–622, and 636–670; these read DLIS…GSNS, ELPP…YMNV, and TNAV…FPKD. Residues 564-584 are compositionally biased toward pro residues; that stretch reads PPTPPATSAPTTPAPPPPSSP. The span at 585-598 shows a compositional bias: low complexity; the sequence is LHPLSTDSSTTTIS. A compositionally biased stretch (polar residues) spans 646–660; the sequence is GPANTSATVSISGSK.

Belongs to the G-protein coupled receptor 1 family. Isoform A and isoform B are expressed in the head. Isoform B only is expressed in the body. Expressed in embryonic glial cells that are involved in ensheathment and insulation of the nervous system. Both isoforms are expressed in glia that insulate the larval and adult nervous system. Also expressed in the germ cells, the gut, and the heart.

It is found in the cell membrane. Its function is as follows. Isoform A and isoform B are required in glia to regulate the acute sensitivity to cocaine and to continuously maintain the proper blood-brain barrier (BBB) function. A moody-mediated signaling pathway functions in glia to regulate nervous system insulation and drug-related behaviors. Galphai and Galphao, and the regulator of G protein signaling, loco, are required in the surface glia to achieve effective insulation. The components function by regulating the cortical actin and thereby stabilizing the extended morphology of the surface glia, which in turn is necessary for the formation of septate junctions of sufficient length to achieve proper sealing of the nerve cord. In Drosophila melanogaster (Fruit fly), this protein is G-protein coupled receptor moody.